Consider the following 341-residue polypeptide: tRNA N6-adenosine threonylcarbamoyltransferase (341 aa).

Fe cation contacts are provided by histidine 111 and histidine 115. Substrate-binding positions include 134–138 (LVSGG), aspartate 167, glycine 180, and asparagine 272. Aspartate 300 provides a ligand contact to Fe cation.

It belongs to the KAE1 / TsaD family. It depends on Fe(2+) as a cofactor.

It localises to the cytoplasm. The catalysed reaction is L-threonylcarbamoyladenylate + adenosine(37) in tRNA = N(6)-L-threonylcarbamoyladenosine(37) in tRNA + AMP + H(+). Required for the formation of a threonylcarbamoyl group on adenosine at position 37 (t(6)A37) in tRNAs that read codons beginning with adenine. Is involved in the transfer of the threonylcarbamoyl moiety of threonylcarbamoyl-AMP (TC-AMP) to the N6 group of A37, together with TsaE and TsaB. TsaD likely plays a direct catalytic role in this reaction. The chain is tRNA N6-adenosine threonylcarbamoyltransferase from Psychromonas ingrahamii (strain DSM 17664 / CCUG 51855 / 37).